Reading from the N-terminus, the 407-residue chain is Arginine deiminase (407 aa).

The active-site Amidino-cysteine intermediate is C397.

This sequence belongs to the arginine deiminase family.

The protein localises to the cytoplasm. The catalysed reaction is L-arginine + H2O = L-citrulline + NH4(+). Its pathway is amino-acid degradation; L-arginine degradation via ADI pathway; carbamoyl phosphate from L-arginine: step 1/2. The chain is Arginine deiminase from Pediococcus pentosaceus (strain ATCC 25745 / CCUG 21536 / LMG 10740 / 183-1w).